Here is a 227-residue protein sequence, read N- to C-terminus: MLVHVPNVLTPAEIALCRARLEAGEWIDGRATAGQQAARAKHNLQIPEDSDTARELGELILRALGRSPLFNAAALPLRVLPPLFNRYDVGMSFRNHVDGAVRAIPGAGMRLRADVSTTLFLTDPDAYEGGELVIEDTFGSHAVKLPAGDMIVYPATSLHRVEPITRGSRWSAFFWSQSMVKDDGRRALLFDLDQGITGVRRKLSDDDPAAIALTSCYHNLLRRWAEM.

Residues 78 to 178 (RVLPPLFNRY…RWSAFFWSQS (101 aa)) enclose the Fe2OG dioxygenase domain. 3 residues coordinate Fe cation: His96, Asp98, and His159. Residue Arg169 participates in 2-oxoglutarate binding.

It depends on Fe(2+) as a cofactor. L-ascorbate is required as a cofactor.

This Methylobacterium nodulans (strain LMG 21967 / CNCM I-2342 / ORS 2060) protein is PKHD-type hydroxylase Mnod_1077.